A 315-amino-acid polypeptide reads, in one-letter code: ATP synthase gamma chain (315 aa).

F-type ATPases have 2 components, CF(1) - the catalytic core - and CF(0) - the membrane proton channel. CF(1) has five subunits: alpha(3), beta(3), gamma(1), delta(1), epsilon(1). CF(0) has four main subunits: a(1), b(1), b'(1) and c(9-12).

It is found in the cellular thylakoid membrane. Produces ATP from ADP in the presence of a proton gradient across the membrane. The gamma chain is believed to be important in regulating ATPase activity and the flow of protons through the CF(0) complex. Functionally, the complex from the organism is particularly stable to disruption and remains functional after 6 hrs at 55 degrees Celsius. This chain is ATP synthase gamma chain, found in Thermosynechococcus vestitus (strain NIES-2133 / IAM M-273 / BP-1).